Reading from the N-terminus, the 2310-residue chain is Transcription initiation factor TFIID subunit 1 (2310 aa).

A coiled-coil region spans residues 80–150 (DYEDIDEVAE…ERRKQRKQVG (71 aa)). 11 disordered regions span residues 115–284 (QQQH…TMKA), 330–352 (KFPD…QTLN), 395–421 (NAGI…TPTL), 521–587 (PNLN…NSSK), 602–686 (DTDS…KQNN), 755–778 (KEHN…KSKK), 802–862 (AANG…NGST), 937–968 (GHNM…HKSD), 1417–1494 (LFGD…AKAK), 1558–1616 (QKKK…SSIG), and 1648–2111 (NNNF…KDGS). Over residues 117 to 129 (QHKEREEQQRLKL) the composition is skewed to basic and acidic residues. Over residues 140–149 (KERRKQRKQV) the composition is skewed to basic residues. Residues 164–174 (DDFDFDEEEEQ) show a composition bias toward acidic residues. Low complexity predominate over residues 191–248 (SSASSLSSSSASSSASSSRSPSMSRSASDIESDSMSDSSRSSGSSISSRSSISSSSSR). Positions 254 to 265 (DGGGGGGGGGGG) are enriched in gly residues. The span at 266–281 (SHRRRHKEKKPKKKVT) shows a compositional bias: basic residues. Composition is skewed to low complexity over residues 411 to 421 (LTSSNTTTPTL) and 524 to 587 (NKNS…NSSK). Residues 603–614 (TDSQNLLQQPLS) show a composition bias toward polar residues. Over residues 615-630 (QEKDKEKEKDKDKAQN) the composition is skewed to basic and acidic residues. Residues 639–685 (NNKKNSTTNNNNLTNNNGNNNNTNNNNNNSNNNSNNNNNNNNNNKQN) show a composition bias toward low complexity. Residues 809–846 (SFEEQLQKDKEEDERKEREEREQSQREIDKFNLSNDKF) adopt a coiled-coil conformation. The span at 813–838 (QLQKDKEEDERKEREEREQSQREIDK) shows a compositional bias: basic and acidic residues. 2 stretches are compositionally biased toward low complexity: residues 950–961 (SSSSSSSSSSSK) and 1421–1449 (SNQS…SSKS). Coiled-coil stretches lie at residues 1422–1522 (NQSQ…DLTQ) and 1574–1604 (KQNE…QRED). Residues 1462-1473 (ESDEEEDNEEEE) show a composition bias toward acidic residues. Composition is skewed to basic and acidic residues over residues 1481–1494 (KNKD…AKAK), 1563–1576 (DQFL…GKQN), and 1588–1605 (RIQE…REDS). Residues 1606-1616 (FNMNSSNSSIG) are compositionally biased toward polar residues. Composition is skewed to low complexity over residues 1648–1659 (NNNFSLNTSSSN), 1667–1682 (SSSS…NNSN), and 1700–1730 (NSDS…SGHP). Basic and acidic residues-rich tracts occupy residues 1731-1773 (RSSD…GEHS) and 1780-1874 (EHRS…ERSR). 2 stretches are compositionally biased toward low complexity: residues 1895-2023 (STGS…NSTN) and 2038-2053 (NGSN…GGNN). A coiled-coil region spans residues 1946–2004 (NNNNNNNNNNINNNNNNNNNINNINNNNNNNINNINNNYNNNNNNNNNNNNNNNNNNNN). Over residues 2058–2072 (QSVLNTPLSASSSGS) the composition is skewed to polar residues. Residues 2082–2091 (SNSESPSLSS) show a composition bias toward low complexity. Residues 2096–2111 (GSDKSSRRNRVRKDGS) are compositionally biased toward basic and acidic residues. Residues 2123-2217 (RILDKLRTND…TSTLQLLAPF (95 aa)) enclose the Bromo domain. The segment at 2244–2289 (VDHTNGSTPSTPITLNTPITPNLPSNSPFFPPVDPPSKAHHSAEDE) is disordered. A compositionally biased stretch (low complexity) spans 2250 to 2271 (STPSTPITLNTPITPNLPSNSP).

The protein belongs to the TAF1 family.

The protein resides in the nucleus. May be a component of the TFIID basal transcription factor complex. This Dictyostelium discoideum (Social amoeba) protein is Transcription initiation factor TFIID subunit 1 (taf1).